Here is a 554-residue protein sequence, read N- to C-terminus: Arginine--tRNA ligase (554 aa).

The 'HIGH' region motif lies at 129 to 139 (ANPTGPLHIGH).

It belongs to the class-I aminoacyl-tRNA synthetase family. As to quaternary structure, monomer.

The protein localises to the cytoplasm. It carries out the reaction tRNA(Arg) + L-arginine + ATP = L-arginyl-tRNA(Arg) + AMP + diphosphate. The polypeptide is Arginine--tRNA ligase (Citrifermentans bemidjiense (strain ATCC BAA-1014 / DSM 16622 / JCM 12645 / Bem) (Geobacter bemidjiensis)).